A 74-amino-acid chain; its full sequence is Protein kish-B (74 aa).

The signal sequence occupies residues Met-1 to Ala-22. Topologically, residues Tyr-23–Gly-52 are extracellular. A helical transmembrane segment spans residues Thr-53–Leu-73. Position 74 (Lys-74) is a topological domain, cytoplasmic.

Belongs to the KISH family.

The protein resides in the golgi apparatus membrane. In terms of biological role, involved in the early part of the secretory pathway. In Danio rerio (Zebrafish), this protein is Protein kish-B (tmem167b).